Consider the following 218-residue polypeptide: MLTIALPKGALLKDSIRLLQSAGLDFSAFLEPGNRQLQILDRQERAKALLVRNSDVPVYVEYGQAQLGVVGYDVLREKTARVAQLIDLRFGGCRMSIAVKASSPYRSVLDLPAHCRIASKFVHCARDYFHNLDLPVEIVPLSGSVELGPITGMSEAIVDLVATGQTLRENGLVEIETLFDSTARLIANPLAYRINADGISELIEELRQSVTQAIAATC.

Belongs to the ATP phosphoribosyltransferase family. Short subfamily. In terms of assembly, heteromultimer composed of HisG and HisZ subunits.

The protein resides in the cytoplasm. It catalyses the reaction 1-(5-phospho-beta-D-ribosyl)-ATP + diphosphate = 5-phospho-alpha-D-ribose 1-diphosphate + ATP. It participates in amino-acid biosynthesis; L-histidine biosynthesis; L-histidine from 5-phospho-alpha-D-ribose 1-diphosphate: step 1/9. In terms of biological role, catalyzes the condensation of ATP and 5-phosphoribose 1-diphosphate to form N'-(5'-phosphoribosyl)-ATP (PR-ATP). Has a crucial role in the pathway because the rate of histidine biosynthesis seems to be controlled primarily by regulation of HisG enzymatic activity. The polypeptide is ATP phosphoribosyltransferase (Synechococcus elongatus (strain ATCC 33912 / PCC 7942 / FACHB-805) (Anacystis nidulans R2)).